Reading from the N-terminus, the 157-residue chain is Arginine regulator (157 aa).

This sequence belongs to the ArgR family.

The protein localises to the cytoplasm. It functions in the pathway amino-acid degradation; L-arginine degradation via ADI pathway. Regulates the transcription of the arc operon, involved in arginine catabolism. The sequence is that of Arginine regulator (argR1) from Streptococcus pyogenes serotype M3 (strain SSI-1).